We begin with the raw amino-acid sequence, 384 residues long: MNRNKREKEYYSIDVGDSTFTVLKRYQNLRPIGSGAQGIVCSAYDHVLDRNVAIKKLSRPFQNQTHAKRAYRELVLMKCVNHKNIIGLLNVFTPQKTLEEFQDVYLVMELMDANLCQVIQMELDHERLSYLLYQMLCGIKHLHAAGIIHRDLKPSNIVVKSDCTLKILDFGLARTAATGLLMTPYVVTRYYRAPEVILGMGYQANVDVWSIGCIMAEMVRGSVLFPGTDHIDQWNKVIEQLGTPSQEFMMKLNQSVRTYVENRPRYAGYSFEKLFPDVLFPADSDHNKLKASQARDLLSKMLVIDASKRISVDEALQHPYINVWYDPSEVEAPPPAITDKQLDEREHSVEEWKELIYKEVLEWEERTKNGVIRGQPASLAQVQQ.

One can recognise a Protein kinase domain in the interval 26–321 (YQNLRPIGSG…VDEALQHPYI (296 aa)). Residues 33-38 (GSGAQG) and lysine 55 each bind ATP. Aspartate 151 acts as the Proton acceptor in catalysis. Phosphothreonine is present on threonine 183. The short motif at 183–185 (TPY) is the TXY element. Tyrosine 185 is modified (phosphotyrosine).

Belongs to the protein kinase superfamily. CMGC Ser/Thr protein kinase family. MAP kinase subfamily. Requires Mg(2+) as cofactor. In terms of processing, dually phosphorylated on Thr-183 and Tyr-185, which activates the enzyme.

The protein resides in the cytoplasm. It localises to the nucleus. Its subcellular location is the synapse. It carries out the reaction L-seryl-[protein] + ATP = O-phospho-L-seryl-[protein] + ADP + H(+). The catalysed reaction is L-threonyl-[protein] + ATP = O-phospho-L-threonyl-[protein] + ADP + H(+). Its activity is regulated as follows. Activated by threonine and tyrosine phosphorylation. Its function is as follows. Responds to activation by environmental stress and pro-inflammatory cytokines by phosphorylating a number of transcription factors, primarily components of AP-1 such as c-Jun and ATF2 and thus regulates AP-1 transcriptional activity. May play a role in the regulation of the circadian clock. In Danio rerio (Zebrafish), this protein is Mitogen-activated protein kinase 8 (mapk8).